We begin with the raw amino-acid sequence, 430 residues long: Asparagine--tRNA ligase (430 aa).

This sequence belongs to the class-II aminoacyl-tRNA synthetase family. Homodimer.

The protein resides in the cytoplasm. The catalysed reaction is tRNA(Asn) + L-asparagine + ATP = L-asparaginyl-tRNA(Asn) + AMP + diphosphate + H(+). In Staphylococcus haemolyticus (strain JCSC1435), this protein is Asparagine--tRNA ligase.